The primary structure comprises 260 residues: Cytochrome c oxidase subunit 3 (260 aa).

Residues 1–15 are Mitochondrial matrix-facing; the sequence is MAHQAHAYHMVDPSP. A helical transmembrane segment spans residues 16–34; the sequence is WPLTGAVAALLLTSGLAMW. Residues 35-40 lie on the Mitochondrial intermembrane side of the membrane; the sequence is FHFGSM. Residues 41–66 traverse the membrane as a helical segment; that stretch reads ILLTLGLITMVLTMIQWWRDVIREGT. Over 67–72 the chain is Mitochondrial matrix; sequence FQGHHT. A helical transmembrane segment spans residues 73–105; sequence PPVQKGLRYGMILFITSEVFFFIGFFWAFYNSS. Residues 106–128 lie on the Mitochondrial intermembrane side of the membrane; that stretch reads LAPTYELGECWPPTGITPLNPFE. The chain crosses the membrane as a helical span at residues 129–152; that stretch reads VPLLNTAVLLASGVTVTWAHHSIM. The Mitochondrial matrix portion of the chain corresponds to 153 to 155; the sequence is HGD. A helical membrane pass occupies residues 156 to 183; the sequence is RKEAIQSLTLTILLGLYFTALQAMEYYE. Topologically, residues 184 to 190 are mitochondrial intermembrane; that stretch reads APFTIAD. Residues 191–223 form a helical membrane-spanning segment; the sequence is GVYGSTFFVATGFHGLHVIIGSLFLSVCLLRQI. The Mitochondrial matrix segment spans residues 224–232; sequence QYHFTSKHH. Residues 233–255 traverse the membrane as a helical segment; that stretch reads FGFEAAWYWHFVDVVWLFLYVSI. The Mitochondrial intermembrane segment spans residues 256–260; sequence YWWGS.

Belongs to the cytochrome c oxidase subunit 3 family. As to quaternary structure, component of the cytochrome c oxidase (complex IV, CIV), a multisubunit enzyme composed of 14 subunits. The complex is composed of a catalytic core of 3 subunits MT-CO1, MT-CO2 and MT-CO3, encoded in the mitochondrial DNA, and 11 supernumerary subunits COX4I, COX5A, COX5B, COX6A, COX6B, COX6C, COX7A, COX7B, COX7C, COX8 and NDUFA4, which are encoded in the nuclear genome. The complex exists as a monomer or a dimer and forms supercomplexes (SCs) in the inner mitochondrial membrane with NADH-ubiquinone oxidoreductase (complex I, CI) and ubiquinol-cytochrome c oxidoreductase (cytochrome b-c1 complex, complex III, CIII), resulting in different assemblies (supercomplex SCI(1)III(2)IV(1) and megacomplex MCI(2)III(2)IV(2)).

It is found in the mitochondrion inner membrane. It carries out the reaction 4 Fe(II)-[cytochrome c] + O2 + 8 H(+)(in) = 4 Fe(III)-[cytochrome c] + 2 H2O + 4 H(+)(out). Its function is as follows. Component of the cytochrome c oxidase, the last enzyme in the mitochondrial electron transport chain which drives oxidative phosphorylation. The respiratory chain contains 3 multisubunit complexes succinate dehydrogenase (complex II, CII), ubiquinol-cytochrome c oxidoreductase (cytochrome b-c1 complex, complex III, CIII) and cytochrome c oxidase (complex IV, CIV), that cooperate to transfer electrons derived from NADH and succinate to molecular oxygen, creating an electrochemical gradient over the inner membrane that drives transmembrane transport and the ATP synthase. Cytochrome c oxidase is the component of the respiratory chain that catalyzes the reduction of oxygen to water. Electrons originating from reduced cytochrome c in the intermembrane space (IMS) are transferred via the dinuclear copper A center (CU(A)) of subunit 2 and heme A of subunit 1 to the active site in subunit 1, a binuclear center (BNC) formed by heme A3 and copper B (CU(B)). The BNC reduces molecular oxygen to 2 water molecules using 4 electrons from cytochrome c in the IMS and 4 protons from the mitochondrial matrix. The chain is Cytochrome c oxidase subunit 3 (mt-co3) from Xenopus laevis (African clawed frog).